We begin with the raw amino-acid sequence, 300 residues long: Bifunctional protein FolD (300 aa).

NADP(+) is bound by residues 168–170 (GRS), S193, and I234.

Belongs to the tetrahydrofolate dehydrogenase/cyclohydrolase family. As to quaternary structure, homodimer.

The enzyme catalyses (6R)-5,10-methylene-5,6,7,8-tetrahydrofolate + NADP(+) = (6R)-5,10-methenyltetrahydrofolate + NADPH. It catalyses the reaction (6R)-5,10-methenyltetrahydrofolate + H2O = (6R)-10-formyltetrahydrofolate + H(+). It functions in the pathway one-carbon metabolism; tetrahydrofolate interconversion. Functionally, catalyzes the oxidation of 5,10-methylenetetrahydrofolate to 5,10-methenyltetrahydrofolate and then the hydrolysis of 5,10-methenyltetrahydrofolate to 10-formyltetrahydrofolate. This is Bifunctional protein FolD from Ehrlichia ruminantium (strain Gardel).